Reading from the N-terminus, the 155-residue chain is Small ribosomal subunit protein uS7c (155 aa).

The protein belongs to the universal ribosomal protein uS7 family. Part of the 30S ribosomal subunit.

Its subcellular location is the plastid. Functionally, one of the primary rRNA binding proteins, it binds directly to 16S rRNA where it nucleates assembly of the head domain of the 30S subunit. In Aneura mirabilis (Parasitic liverwort), this protein is Small ribosomal subunit protein uS7c (rps7).